Reading from the N-terminus, the 256-residue chain is Type III pantothenate kinase (256 aa).

Asp-6–Val-13 provides a ligand contact to ATP. Gly-109–Arg-112 is a substrate binding site. Asp-111 (proton acceptor) is an active-site residue. Asp-132 lines the K(+) pocket. An ATP-binding site is contributed by Thr-135. Residue Thr-186 coordinates substrate.

This sequence belongs to the type III pantothenate kinase family. In terms of assembly, homodimer. It depends on NH4(+) as a cofactor. The cofactor is K(+).

It is found in the cytoplasm. The enzyme catalyses (R)-pantothenate + ATP = (R)-4'-phosphopantothenate + ADP + H(+). The protein operates within cofactor biosynthesis; coenzyme A biosynthesis; CoA from (R)-pantothenate: step 1/5. Catalyzes the phosphorylation of pantothenate (Pan), the first step in CoA biosynthesis. This is Type III pantothenate kinase from Fusobacterium nucleatum subsp. nucleatum (strain ATCC 25586 / DSM 15643 / BCRC 10681 / CIP 101130 / JCM 8532 / KCTC 2640 / LMG 13131 / VPI 4355).